The primary structure comprises 231 residues: Lipoprotein-releasing system ATP-binding protein LolD (231 aa).

An ABC transporter domain is found at 6–231 (LQVQAVSKSY…YLQAVAEHAQ (226 aa)). Residue 42-49 (GTSGSGKS) participates in ATP binding.

The protein belongs to the ABC transporter superfamily. Lipoprotein translocase (TC 3.A.1.125) family. As to quaternary structure, the complex is composed of two ATP-binding proteins (LolD) and two transmembrane proteins (LolC and LolE).

It localises to the cell inner membrane. Part of the ABC transporter complex LolCDE involved in the translocation of mature outer membrane-directed lipoproteins, from the inner membrane to the periplasmic chaperone, LolA. Responsible for the formation of the LolA-lipoprotein complex in an ATP-dependent manner. The sequence is that of Lipoprotein-releasing system ATP-binding protein LolD from Shewanella sp. (strain MR-4).